The following is a 40-amino-acid chain: Photosystem II reaction center protein J (40 aa).

Residues 8-28 (IPLWLIGTVTGILVIGLIGVF) form a helical membrane-spanning segment.

This sequence belongs to the PsbJ family. As to quaternary structure, PSII is composed of 1 copy each of membrane proteins PsbA, PsbB, PsbC, PsbD, PsbE, PsbF, PsbH, PsbI, PsbJ, PsbK, PsbL, PsbM, PsbT, PsbX, PsbY, PsbZ, Psb30/Ycf12, at least 3 peripheral proteins of the oxygen-evolving complex and a large number of cofactors. It forms dimeric complexes.

Its subcellular location is the plastid. The protein resides in the chloroplast thylakoid membrane. One of the components of the core complex of photosystem II (PSII). PSII is a light-driven water:plastoquinone oxidoreductase that uses light energy to abstract electrons from H(2)O, generating O(2) and a proton gradient subsequently used for ATP formation. It consists of a core antenna complex that captures photons, and an electron transfer chain that converts photonic excitation into a charge separation. The polypeptide is Photosystem II reaction center protein J (Nymphaea alba (White water-lily)).